A 164-amino-acid chain; its full sequence is General odorant-binding protein 1 (164 aa).

Positions 1-18 (MWKLVVVLTVNLLQGALT) are cleaved as a signal peptide. Intrachain disulfides connect Cys37/Cys72, Cys68/Cys126, and Cys115/Cys135.

The protein belongs to the PBP/GOBP family. As to quaternary structure, homodimer. Antenna.

Its function is as follows. Present in the aqueous fluid surrounding olfactory sensory dendrites and are thought to aid in the capture and transport of hydrophobic odorants into and through this fluid. This Bombyx mori (Silk moth) protein is General odorant-binding protein 1.